The chain runs to 224 residues: Propanediol dehydratase medium subunit (224 aa).

The segment at 1 to 18 is targets protein to the BMC; sequence MEINEKLLRQIIEDVLRD.

Belongs to the diol/glycerol dehydratase medium subunit family. In terms of assembly, the propanediol dehydratase enzyme is a heterotrimeric complex composed of a large (PduC), a medium (PduD) and a small (PduE) subunit. It depends on adenosylcob(III)alamin as a cofactor.

It localises to the bacterial microcompartment. The enzyme catalyses propane-1,2-diol = propanal + H2O. It participates in polyol metabolism; 1,2-propanediol degradation. With respect to regulation, inhibited by glycerol. Functionally, part of the PduCDE complex that catalyzes the dehydration of 1,2-propanediol (1,2-PD) to propionaldehyde. Required for S.typhimurium growth on 1,2-PD as the sole carbon and energy source. This subunit is directly targeted to the bacterial microcompartment (BMC) dedicated to 1,2-PD degradation, and is also responsible for targeting the other 2 subunits (pduC and pduE). In terms of biological role, the 1,2-PD-specific bacterial microcompartment (BMC) concentrates low levels of 1,2-PD catabolic enzymes, concentrates volatile reaction intermediates thus enhancing pathway flux and keeps the level of toxic, mutagenic propionaldehyde low. This Salmonella typhimurium (strain LT2 / SGSC1412 / ATCC 700720) protein is Propanediol dehydratase medium subunit.